The sequence spans 178 residues: ATP-dependent protease subunit HslV (178 aa).

The active site involves Thr7. Positions 162, 165, and 168 each coordinate Na(+).

This sequence belongs to the peptidase T1B family. HslV subfamily. As to quaternary structure, a double ring-shaped homohexamer of HslV is capped on each side by a ring-shaped HslU homohexamer. The assembly of the HslU/HslV complex is dependent on binding of ATP.

It is found in the cytoplasm. The catalysed reaction is ATP-dependent cleavage of peptide bonds with broad specificity.. Its activity is regulated as follows. Allosterically activated by HslU binding. Its function is as follows. Protease subunit of a proteasome-like degradation complex believed to be a general protein degrading machinery. The chain is ATP-dependent protease subunit HslV from Paraburkholderia phymatum (strain DSM 17167 / CIP 108236 / LMG 21445 / STM815) (Burkholderia phymatum).